Reading from the N-terminus, the 295-residue chain is Autophagy-related protein 37 (295 aa).

The ACB domain occupies 5–103 (VDRVFVHALN…LIDTMHRYAT (99 aa)). Disordered regions lie at residues 124-162 (NSPSSSLSSPRPNQSTGAGAQQPQQEPEQASDGEGPLKE) and 174-201 (LRSQRQVDLEDDEVDVPTSDRSSGRWQR). The span at 125–153 (SPSSSLSSPRPNQSTGAGAQQPQQEPEQA) shows a compositional bias: low complexity. N136 is a glycosylation site (N-linked (GlcNAc...) asparagine). A helical transmembrane segment spans residues 244 to 264 (WLLVKHIFADLVILSVVLLWL).

It belongs to the ATG37 family.

The protein resides in the peroxisome membrane. In terms of biological role, acyl-CoA binding protein which acts as the peroxisome receptor for pexophagy. Required for both micropexophagy and macropexophagy, but not for the cytoplasm to vacuole transport (Cvt) or autophagy pathways. Required for functional micropexophagic apparatus (MIPA) and relocation of ATG11 to the peroxisome-sequestering arms of the vacuole. Binds palmitoyl-CoA but not oleyl-CoA. In Gibberella zeae (strain ATCC MYA-4620 / CBS 123657 / FGSC 9075 / NRRL 31084 / PH-1) (Wheat head blight fungus), this protein is Autophagy-related protein 37.